The sequence spans 85 residues: Elongation factor 1-beta (85 aa).

The protein belongs to the EF-1-beta/EF-1-delta family.

In terms of biological role, promotes the exchange of GDP for GTP in EF-1-alpha/GDP, thus allowing the regeneration of EF-1-alpha/GTP that could then be used to form the ternary complex EF-1-alpha/GTP/AAtRNA. This Methanoregula boonei (strain DSM 21154 / JCM 14090 / 6A8) protein is Elongation factor 1-beta.